A 228-amino-acid polypeptide reads, in one-letter code: 5'-methylthioadenosine/S-adenosylhomocysteine nucleosidase (228 aa).

Glu-11 (proton acceptor) is an active-site residue. Substrate-binding positions include Gly-77, Ile-151, and Met-172–Glu-173. The Proton donor role is filled by Asp-196.

Belongs to the PNP/UDP phosphorylase family. MtnN subfamily.

The catalysed reaction is S-adenosyl-L-homocysteine + H2O = S-(5-deoxy-D-ribos-5-yl)-L-homocysteine + adenine. It carries out the reaction S-methyl-5'-thioadenosine + H2O = 5-(methylsulfanyl)-D-ribose + adenine. It catalyses the reaction 5'-deoxyadenosine + H2O = 5-deoxy-D-ribose + adenine. It functions in the pathway amino-acid biosynthesis; L-methionine biosynthesis via salvage pathway; S-methyl-5-thio-alpha-D-ribose 1-phosphate from S-methyl-5'-thioadenosine (hydrolase route): step 1/2. Its function is as follows. Catalyzes the irreversible cleavage of the glycosidic bond in both 5'-methylthioadenosine (MTA) and S-adenosylhomocysteine (SAH/AdoHcy) to adenine and the corresponding thioribose, 5'-methylthioribose and S-ribosylhomocysteine, respectively. Also cleaves 5'-deoxyadenosine, a toxic by-product of radical S-adenosylmethionine (SAM) enzymes, into 5-deoxyribose and adenine. In Staphylococcus aureus (strain JH1), this protein is 5'-methylthioadenosine/S-adenosylhomocysteine nucleosidase.